The chain runs to 798 residues: Nuclear intron maturase 4, mitochondrial (798 aa).

The N-terminal 16 residues, 1–16, are a transit peptide targeting the mitochondrion; it reads MFRKRNLVLDLLRRCY. Residues 578–665 are intron maturase type-2; it reads VVAPTNAIGR…AAKYRIHENE (88 aa). A THAP-type zinc finger spans residues 729–778; that stretch reads CFVIGCSMAAPAVYTLHAMERQKFPGWKTGFSVCIPSSLNGRRIGLCKQH.

This sequence belongs to the plant nuclear intron maturase (nMat) family.

It localises to the mitochondrion. The protein resides in the plastid. The protein localises to the chloroplast. In terms of biological role, nuclear-encoded maturase required for splicing of group-II introns in mitochondria. Involved in NAD1 pre-mRNA processing and maturation of introns 1, 3 and 4. Necessary for mitochondrial biogenesis during early developmental stages. Essential for respiratory holocomplex I biogenesis in mitochondria. The sequence is that of Nuclear intron maturase 4, mitochondrial from Arabidopsis thaliana (Mouse-ear cress).